The primary structure comprises 356 residues: Histidinol-phosphate aminotransferase 2 (356 aa).

The residue at position 217 (lysine 217) is an N6-(pyridoxal phosphate)lysine.

Belongs to the class-II pyridoxal-phosphate-dependent aminotransferase family. Histidinol-phosphate aminotransferase subfamily. Homodimer. Pyridoxal 5'-phosphate is required as a cofactor.

It catalyses the reaction L-histidinol phosphate + 2-oxoglutarate = 3-(imidazol-4-yl)-2-oxopropyl phosphate + L-glutamate. Its pathway is amino-acid biosynthesis; L-histidine biosynthesis; L-histidine from 5-phospho-alpha-D-ribose 1-diphosphate: step 7/9. In Burkholderia pseudomallei (strain 1710b), this protein is Histidinol-phosphate aminotransferase 2.